The following is a 103-amino-acid chain: Large ribosomal subunit protein uL23c (103 aa).

Belongs to the universal ribosomal protein uL23 family. As to quaternary structure, part of the 50S ribosomal subunit.

It is found in the plastid. Its subcellular location is the chloroplast. Binds to 23S rRNA. In Gracilaria tenuistipitata var. liui (Red alga), this protein is Large ribosomal subunit protein uL23c (rpl23).